Reading from the N-terminus, the 553-residue chain is CDP-diacylglycerol--glycerol-3-phosphate 3-phosphatidyltransferase, mitochondrial (553 aa).

The transit peptide at 1 to 25 directs the protein to the mitochondrion; sequence MAAPAAGPVFWRRLLGLLPGRPGLA. Ser-46 carries the post-translational modification Phosphoserine. Position 121-128 (121-128) interacts with ATP; that stretch reads ASLYLGTG. PLD phosphodiesterase domains are found at residues 212-238 and 457-490; these read TIGL…SDSY and RGWT…GYRS. Catalysis depends on residues His-217, Lys-219, and Asp-224.

It belongs to the CDP-alcohol phosphatidyltransferase class-II family. Widely expressed with higher expression in testis, liver and brain.

The protein resides in the mitochondrion. The catalysed reaction is a CDP-1,2-diacyl-sn-glycerol + sn-glycerol 3-phosphate = a 1,2-diacyl-sn-glycero-3-phospho-(1'-sn-glycero-3'-phosphate) + CMP + H(+). It functions in the pathway phospholipid metabolism; phosphatidylglycerol biosynthesis; phosphatidylglycerol from CDP-diacylglycerol: step 1/2. Activated by calcium and magnesium and inhibited by other bivalent cations. In terms of biological role, functions in the biosynthesis of the anionic phospholipids phosphatidylglycerol and cardiolipin. The protein is CDP-diacylglycerol--glycerol-3-phosphate 3-phosphatidyltransferase, mitochondrial (Pgs1) of Mus musculus (Mouse).